We begin with the raw amino-acid sequence, 274 residues long: Dermonecrotic toxin SdSicTox-betaIIB1bv (274 aa).

Residue histidine 5 is part of the active site. Glutamate 25 and aspartate 27 together coordinate Mg(2+). Histidine 41 functions as the Nucleophile in the catalytic mechanism. Intrachain disulfides connect cysteine 45/cysteine 51 and cysteine 47/cysteine 190. Aspartate 85 serves as a coordination point for Mg(2+).

It belongs to the arthropod phospholipase D family. Class II subfamily. Mg(2+) is required as a cofactor. As to expression, expressed by the venom gland.

The protein resides in the secreted. It catalyses the reaction an N-(acyl)-sphingosylphosphocholine = an N-(acyl)-sphingosyl-1,3-cyclic phosphate + choline. The enzyme catalyses an N-(acyl)-sphingosylphosphoethanolamine = an N-(acyl)-sphingosyl-1,3-cyclic phosphate + ethanolamine. It carries out the reaction a 1-acyl-sn-glycero-3-phosphocholine = a 1-acyl-sn-glycero-2,3-cyclic phosphate + choline. The catalysed reaction is a 1-acyl-sn-glycero-3-phosphoethanolamine = a 1-acyl-sn-glycero-2,3-cyclic phosphate + ethanolamine. Its function is as follows. Dermonecrotic toxins cleave the phosphodiester linkage between the phosphate and headgroup of certain phospholipids (sphingolipid and lysolipid substrates), forming an alcohol (often choline) and a cyclic phosphate. This toxin acts on sphingomyelin (SM). It may also act on ceramide phosphoethanolamine (CPE), lysophosphatidylcholine (LPC) and lysophosphatidylethanolamine (LPE), but not on lysophosphatidylserine (LPS), and lysophosphatidylglycerol (LPG). It acts by transphosphatidylation, releasing exclusively cyclic phosphate products as second products. Induces dermonecrosis, hemolysis, increased vascular permeability, edema, inflammatory response, and platelet aggregation. This chain is Dermonecrotic toxin SdSicTox-betaIIB1bv, found in Sicarius cf. damarensis (strain GJB-2008) (Six-eyed sand spider).